The following is a 160-amino-acid chain: Nutritionally-regulated adipose and cardiac enriched protein homolog (160 aa).

Positions 1 to 69 (MRTAAGAVSP…AKPQRTSRRV (69 aa)) are disordered. 2 stretches are compositionally biased toward basic and acidic residues: residues 12–25 (SRPETRRQTRKNEE) and 33–42 (CRAEREDNRK). A helical transmembrane segment spans residues 101–121 (GGSLLLQLCVCVLLVLALGLY).

The protein localises to the cell membrane. This is Nutritionally-regulated adipose and cardiac enriched protein homolog (NRAC) from Homo sapiens (Human).